Reading from the N-terminus, the 591-residue chain is L-fucose isomerase (591 aa).

Residues Glu-337 and Asp-361 each act as proton acceptor in the active site. Mn(2+) is bound by residues Glu-337, Asp-361, and His-528.

This sequence belongs to the L-fucose isomerase family. Homohexamer. Mn(2+) serves as cofactor.

It is found in the cytoplasm. The enzyme catalyses L-fucose = L-fuculose. The protein operates within carbohydrate degradation; L-fucose degradation; L-lactaldehyde and glycerone phosphate from L-fucose: step 1/3. Converts the aldose L-fucose into the corresponding ketose L-fuculose. The protein is L-fucose isomerase of Escherichia coli O17:K52:H18 (strain UMN026 / ExPEC).